The sequence spans 514 residues: 2,3-bisphosphoglycerate-independent phosphoglycerate mutase (514 aa).

Residues D14 and S64 each coordinate Mn(2+). S64 acts as the Phosphoserine intermediate in catalysis. Substrate-binding positions include H125, 155–156, R187, R193, 263–266, and K336; these read RD and RADR. Mn(2+) contacts are provided by D403, H407, D444, H445, and H463.

Belongs to the BPG-independent phosphoglycerate mutase family. As to quaternary structure, monomer. Mn(2+) serves as cofactor.

It catalyses the reaction (2R)-2-phosphoglycerate = (2R)-3-phosphoglycerate. It participates in carbohydrate degradation; glycolysis; pyruvate from D-glyceraldehyde 3-phosphate: step 3/5. Functionally, catalyzes the interconversion of 2-phosphoglycerate and 3-phosphoglycerate. The chain is 2,3-bisphosphoglycerate-independent phosphoglycerate mutase from Shewanella sp. (strain MR-7).